The primary structure comprises 383 residues: uncharacterized protein (383 aa).

It belongs to the peptidase M20 family.

This is an uncharacterized protein from Staphylococcus aureus (strain N315).